Here is a 390-residue protein sequence, read N- to C-terminus: Leu/Ile/Val-binding protein homolog 6 (390 aa).

Positions 1 to 21 (MKKIALTALAVFSLAASAAYA) are cleaved as a signal peptide.

This sequence belongs to the leucine-binding protein family.

Functionally, component of an amino-acid transport system. The chain is Leu/Ile/Val-binding protein homolog 6 from Brucella melitensis biotype 1 (strain ATCC 23456 / CCUG 17765 / NCTC 10094 / 16M).